We begin with the raw amino-acid sequence, 312 residues long: Aspartate carbamoyltransferase catalytic subunit (312 aa).

Residues R58 and T59 each coordinate carbamoyl phosphate. An L-aspartate-binding site is contributed by K86. 3 residues coordinate carbamoyl phosphate: R108, H136, and Q139. R169 and R223 together coordinate L-aspartate. G264 and P265 together coordinate carbamoyl phosphate.

It belongs to the aspartate/ornithine carbamoyltransferase superfamily. ATCase family. As to quaternary structure, heterododecamer (2C3:3R2) of six catalytic PyrB chains organized as two trimers (C3), and six regulatory PyrI chains organized as three dimers (R2).

The catalysed reaction is carbamoyl phosphate + L-aspartate = N-carbamoyl-L-aspartate + phosphate + H(+). Its pathway is pyrimidine metabolism; UMP biosynthesis via de novo pathway; (S)-dihydroorotate from bicarbonate: step 2/3. Its function is as follows. Catalyzes the condensation of carbamoyl phosphate and aspartate to form carbamoyl aspartate and inorganic phosphate, the committed step in the de novo pyrimidine nucleotide biosynthesis pathway. The sequence is that of Aspartate carbamoyltransferase catalytic subunit from Heliobacterium modesticaldum (strain ATCC 51547 / Ice1).